Consider the following 525-residue polypeptide: GMP synthase [glutamine-hydrolyzing] (525 aa).

The 199-residue stretch at 9-207 folds into the Glutamine amidotransferase type-1 domain; sequence RILILDFGSQ…VKEICHCEAL (199 aa). The Nucleophile role is filled by C86. Active-site residues include H181 and E183. In terms of domain architecture, GMPS ATP-PPase spans 208–400; the sequence is WTPATIIEDA…LGLPYNMLYR (193 aa). Position 235-241 (235-241) interacts with ATP; sequence SGGVDSS.

As to quaternary structure, homodimer.

It catalyses the reaction XMP + L-glutamine + ATP + H2O = GMP + L-glutamate + AMP + diphosphate + 2 H(+). It functions in the pathway purine metabolism; GMP biosynthesis; GMP from XMP (L-Gln route): step 1/1. In terms of biological role, catalyzes the synthesis of GMP from XMP. In Tolumonas auensis (strain DSM 9187 / NBRC 110442 / TA 4), this protein is GMP synthase [glutamine-hydrolyzing].